We begin with the raw amino-acid sequence, 350 residues long: Very-long-chain 3-oxoacyl-CoA reductase (350 aa).

The helical transmembrane segment at 28-48 (SLVLLAGIGALSVGTFALRLV) threads the bilayer. Residues Val79, Asp134, Asn161, Lys196, Tyr228, Lys232, Val261, and Ser263 each contribute to the NADP(+) site. Tyr228 serves as the catalytic Proton donor. Lys232 acts as the Lowers pKa of active site Tyr in catalysis.

It belongs to the short-chain dehydrogenases/reductases (SDR) family.

It is found in the endoplasmic reticulum membrane. The catalysed reaction is a very-long-chain (3R)-3-hydroxyacyl-CoA + NADP(+) = a very-long-chain 3-oxoacyl-CoA + NADPH + H(+). Its pathway is lipid metabolism; fatty acid biosynthesis. Functionally, component of the microsomal membrane bound fatty acid elongation system, which produces the 26-carbon very long-chain fatty acids (VLCFA) from palmitate. Catalyzes the reduction of the 3-ketoacyl-CoA intermediate that is formed in each cycle of fatty acid elongation. VLCFAs serve as precursors for ceramide and sphingolipids. The protein is Very-long-chain 3-oxoacyl-CoA reductase of Mycosarcoma maydis (Corn smut fungus).